Here is a 727-residue protein sequence, read N- to C-terminus: UvrABC system protein C (727 aa).

The GIY-YIG domain maps to 16 to 95 (VDPGVYKFRD…IKEFDPRFNV (80 aa)). Residues 208-243 (DRLVRQLEARMQEASEELDFETAARLRDDVGALRRA) form the UVR domain. 2 disordered regions span residues 503–527 (DADQVSGGDGGDLAPEAAIDPQTGR) and 679–727 (SADV…TGVE). Positions 701-711 (NGADIPREPVE) are enriched in basic and acidic residues. Residues 718–727 (QSASQRTGVE) are compositionally biased toward polar residues.

The protein belongs to the UvrC family. In terms of assembly, interacts with UvrB in an incision complex.

It localises to the cytoplasm. The UvrABC repair system catalyzes the recognition and processing of DNA lesions. UvrC both incises the 5' and 3' sides of the lesion. The N-terminal half is responsible for the 3' incision and the C-terminal half is responsible for the 5' incision. The polypeptide is UvrABC system protein C (Rhodococcus jostii (strain RHA1)).